A 326-amino-acid chain; its full sequence is HTH-type transcriptional regulator BlaA (326 aa).

The region spanning 1 to 59 (MDVVNACRAFVKVSERGSFTVGAAAAQMSQSVASRRVAALEKHFGERLFDRASRRPSLT) is the HTH lysR-type domain. Residues 19–38 (FTVGAAAAQMSQSVASRRVA) constitute a DNA-binding region (H-T-H motif). The disordered stretch occupies residues 289–326 (TADHGPDPATGAGPGADAGTEPGARAEPGAPEEGAQAC). Residues 295-326 (DPATGAGPGADAGTEPGARAEPGAPEEGAQAC) show a composition bias toward low complexity.

The protein belongs to the LysR transcriptional regulatory family.

Functionally, positive regulator of the expression of the gene (blaB) for beta-lactamase. It binds to the blaL-blaA intercistronic region. This chain is HTH-type transcriptional regulator BlaA (blaA), found in Streptomyces cacaoi.